The chain runs to 193 residues: MASPNKKQHTNSDTWLIVGLGNPGDKYANTRHNVGRMVIGELLDRQVPAASLNTHKKTNTDIAEVKIAGRKVVLAQPRTFMNVSGGPVQQLAAFFKIPAENIIVAYDDLEGDPGAVKLRQSGGDKGHNGLKSITKSLGTKDYWRLSCGIGRPPGRMDPAAYVLKPFPKSEAAEVAIMCADAADEVERTLGVGN.

Tyr-27 is a binding site for tRNA. His-32 acts as the Proton acceptor in catalysis. Phe-80, Asn-82, and Asn-128 together coordinate tRNA.

It belongs to the PTH family. As to quaternary structure, monomer.

Its subcellular location is the cytoplasm. The enzyme catalyses an N-acyl-L-alpha-aminoacyl-tRNA + H2O = an N-acyl-L-amino acid + a tRNA + H(+). Functionally, hydrolyzes ribosome-free peptidyl-tRNAs (with 1 or more amino acids incorporated), which drop off the ribosome during protein synthesis, or as a result of ribosome stalling. In terms of biological role, catalyzes the release of premature peptidyl moieties from peptidyl-tRNA molecules trapped in stalled 50S ribosomal subunits, and thus maintains levels of free tRNAs and 50S ribosomes. This chain is Peptidyl-tRNA hydrolase 1, found in Corynebacterium jeikeium (strain K411).